The primary structure comprises 487 residues: Zinc finger and BTB domain-containing protein 32 (487 aa).

The 59-residue stretch at 29–87 folds into the BTB domain; sequence CDTLITVGSQEFPAHSLVLAGVSQQLGRRGQWALGEGISPSTFAQLLNFVYGESVELQP. Basic and acidic residues predominate over residues 112 to 166; it reads ARGDRAKKPDPGLKKHQEEPEKPSRNPERELGDPGEKQKPEQVSRTGGREQEMLH. 2 disordered regions span residues 112–244 and 308–371; these read ARGD…TSVT and QNQL…ARSR. Residues 308 to 320 show a composition bias toward polar residues; it reads QNQLASSSPTPGS. Positions 357-369 are enriched in pro residues; sequence PPRPHPPPAPPAR. C2H2-type zinc fingers lie at residues 373–395, 401–423, and 428–450; these read YACS…YRVH, FSCS…LRTH, and YRCS…MRGH. Residues 468–487 are disordered; that stretch reads SSSRPSRPSTSPCCPSSSTT.

This sequence belongs to the krueppel C2H2-type zinc-finger protein family. As to quaternary structure, homodimer (via PTB domain). Interacts with the N-terminal of FANCC. Interacts with ZBTB16. Interacts with GATA3. Predominantly expressed in testis. Some isoforms are ubiquitously expressed.

It localises to the nucleus. DNA-binding protein that binds to the to a 5'-TGTACAGTGT-3' core sequence. May function as a transcriptional transactivator and transcriptional repressor. Probably exerts its repressor effect by preventing GATA3 from binding to DNA. May play a role in regulating the differentiation and activation of helper T-cells. The protein is Zinc finger and BTB domain-containing protein 32 (ZBTB32) of Homo sapiens (Human).